Here is a 162-residue protein sequence, read N- to C-terminus: Small ribosomal subunit protein uS13 (162 aa).

Residues 142–162 form a disordered region; it reads RGQRTKSTGRRGSTVGVSRKK.

The protein belongs to the universal ribosomal protein uS13 family. Part of the 30S ribosomal subunit. Forms a loose heterodimer with protein S19. Forms two bridges to the 50S subunit in the 70S ribosome.

Functionally, located at the top of the head of the 30S subunit, it contacts several helices of the 16S rRNA. In the 70S ribosome it contacts the 23S rRNA (bridge B1a) and protein L5 of the 50S subunit (bridge B1b), connecting the 2 subunits; these bridges are implicated in subunit movement. The sequence is that of Small ribosomal subunit protein uS13 from Methanosarcina mazei (strain ATCC BAA-159 / DSM 3647 / Goe1 / Go1 / JCM 11833 / OCM 88) (Methanosarcina frisia).